A 726-amino-acid polypeptide reads, in one-letter code: X-ray repair cross-complementing protein 5 (726 aa).

A VWFA domain is found at 8 to 160 (AVVLCMDVGL…ANLKKAEITL (153 aa)). A leucine-zipper region spans residues 137 to 164 (LSSPFSVDQLEVIIANLKKAEITLQFFL). Residues 175 to 186 (GSSNNRGNAGSS) show a composition bias toward low complexity. A disordered region spans residues 175 to 198 (GSSNNRGNAGSSDRGCGPGKGLSD). The region spanning 253-449 (GSSLSIRIVG…NKKFTPTESQ (197 aa)) is the Ku domain. The EEXXXDL motif motif lies at 714 to 722 (EDEGDVDDL).

Belongs to the ku80 family. In terms of assembly, heterodimer composed of xrcc5/Ku80 and xrcc6/Ku70. Ubiquitinated via 'Lys-48'-linked polyubiquitination at DNA double strand break sites (DSBs), leading to its release from DSBs and subsequent proteasomal degradation. Polyubiquitination is not required for completion of NHEJ. Expressed at high levels in oocyte and testis.

Its subcellular location is the nucleus. In terms of biological role, single-stranded DNA-dependent ATP-dependent helicase that plays a key role in DNA non-homologous end joining (NHEJ). The protein is X-ray repair cross-complementing protein 5 of Xenopus laevis (African clawed frog).